We begin with the raw amino-acid sequence, 149 residues long: MADQLTDDQIAEFKEAFSLFDKDGDGCITTKELGTVMRSLGQNPTEAELQDMINEVDADGNGTIDFPEFLNLMARKMKDTDSEEELKEAFRVFDKDQNGFISAAELRHVMTNLGEKLTDEEVEEMIREADVDGDGQINYDEFVKVMMAK.

An N-acetylalanine modification is found at Ala-2. EF-hand domains follow at residues 8 to 43, 44 to 79, 81 to 116, and 117 to 149; these read DQIAEFKEAFSLFDKDGDGCITTKELGTVMRSLGQN, PTEAELQDMINEVDADGNGTIDFPEFLNLMARKMKD, DSEEELKEAFRVFDKDQNGFISAAELRHVMTNLGEK, and LTDEEVEEMIREADVDGDGQINYDEFVKVMMAK. Ca(2+) is bound by residues Asp-21, Asp-23, Asp-25, Cys-27, Glu-32, Asp-57, Asp-59, Asn-61, Thr-63, Glu-68, Asp-94, Asp-96, Asn-98, and Glu-105. Lys-116 is modified (N6,N6,N6-trimethyllysine). Asp-130, Asp-132, Asp-134, Gln-136, and Glu-141 together coordinate Ca(2+).

Belongs to the calmodulin family.

Its function is as follows. Calmodulin mediates the control of a large number of enzymes, ion channels and other proteins by Ca(2+). Among the enzymes to be stimulated by the calmodulin-Ca(2+) complex are a number of protein kinases and phosphatases. In Oryza sativa subsp. japonica (Rice), this protein is Calmodulin-3 (CAM3).